The primary structure comprises 684 residues: Glycine--tRNA ligase beta subunit (684 aa).

This sequence belongs to the class-II aminoacyl-tRNA synthetase family. Tetramer of two alpha and two beta subunits.

It is found in the cytoplasm. The enzyme catalyses tRNA(Gly) + glycine + ATP = glycyl-tRNA(Gly) + AMP + diphosphate. This chain is Glycine--tRNA ligase beta subunit, found in Ectopseudomonas mendocina (strain ymp) (Pseudomonas mendocina).